We begin with the raw amino-acid sequence, 494 residues long: Cytochrome P450 2A7 (494 aa).

A heme-binding site is contributed by Cys439.

The protein belongs to the cytochrome P450 family. Heme serves as cofactor.

It is found in the endoplasmic reticulum membrane. The protein localises to the microsome membrane. The catalysed reaction is an organic molecule + reduced [NADPH--hemoprotein reductase] + O2 = an alcohol + oxidized [NADPH--hemoprotein reductase] + H2O + H(+). Cytochromes P450 are a group of heme-thiolate monooxygenases. In liver microsomes, this enzyme is involved in an NADPH-dependent electron transport pathway. It oxidizes a variety of structurally unrelated compounds, including steroids, fatty acids, and xenobiotics. The polypeptide is Cytochrome P450 2A7 (CYP2A7) (Homo sapiens (Human)).